A 119-amino-acid polypeptide reads, in one-letter code: Large ribosomal subunit protein bL20c (119 aa).

The protein belongs to the bacterial ribosomal protein bL20 family.

The protein localises to the plastid. The protein resides in the chloroplast. Functionally, binds directly to 23S ribosomal RNA and is necessary for the in vitro assembly process of the 50S ribosomal subunit. It is not involved in the protein synthesizing functions of that subunit. The chain is Large ribosomal subunit protein bL20c from Nandina domestica (Heavenly bamboo).